A 438-amino-acid polypeptide reads, in one-letter code: 5-methylthioadenosine/S-adenosylhomocysteine deaminase (438 aa).

Zn(2+)-binding residues include His-71 and His-73. Substrate contacts are provided by Glu-100 and His-192. His-219 is a binding site for Zn(2+). Residues Glu-222 and Asp-307 each contribute to the substrate site. Position 307 (Asp-307) interacts with Zn(2+).

This sequence belongs to the metallo-dependent hydrolases superfamily. MTA/SAH deaminase family. Zn(2+) is required as a cofactor.

It catalyses the reaction S-adenosyl-L-homocysteine + H2O + H(+) = S-inosyl-L-homocysteine + NH4(+). The enzyme catalyses S-methyl-5'-thioadenosine + H2O + H(+) = S-methyl-5'-thioinosine + NH4(+). Catalyzes the deamination of 5-methylthioadenosine and S-adenosyl-L-homocysteine into 5-methylthioinosine and S-inosyl-L-homocysteine, respectively. Is also able to deaminate adenosine. The chain is 5-methylthioadenosine/S-adenosylhomocysteine deaminase from Syntrophobacter fumaroxidans (strain DSM 10017 / MPOB).